We begin with the raw amino-acid sequence, 111 residues long: Glutaredoxin-C2 (111 aa).

In terms of domain architecture, Glutaredoxin spans 3-103 (MQKAKEIVNS…PLLTEAGAIA (101 aa)). C23 and C26 are joined by a disulfide.

The protein belongs to the glutaredoxin family. CPYC subfamily.

It localises to the cytoplasm. Has a glutathione-disulfide oxidoreductase activity in the presence of NADPH and glutathione reductase. Reduces low molecular weight disulfides and proteins. The chain is Glutaredoxin-C2 (GRXC2) from Arabidopsis thaliana (Mouse-ear cress).